The chain runs to 1705 residues: Alpha-protein kinase 3 (1705 aa).

Residues 1–10 (MGSRRAPSRG) show a composition bias toward low complexity. Residues 1–33 (MGSRRAPSRGWGAGGRSGAGGDGEDDGPVWIPS) are disordered. Over residues 11–21 (WGAGGRSGAGG) the composition is skewed to gly residues. The region spanning 77-168 (PLFETTLKSR…GIVSCSGVLE (92 aa)) is the Ig-like 1 domain. Over residues 211–221 (DTLRKLSPDRF) the composition is skewed to basic and acidic residues. Disordered regions lie at residues 211 to 244 (DTLR…EPEG), 308 to 749 (LKEE…GPRA), 792 to 845 (GPLS…ERPG), 1082 to 1145 (GLAS…KFPG), and 1173 to 1226 (RAAG…MLEV). S228 bears the Phosphoserine mark. Positions 308 to 342 (LKEESGAKKKKKDEESKQGLRKPELEKAAQSRRSS) are enriched in basic and acidic residues. Low complexity predominate over residues 370 to 382 (PRGRAARGPGSSG). A compositionally biased stretch (polar residues) spans 495–504 (DSKPISSLSQ). The span at 557–579 (TTTAPTMSASSSSDVASIGVSTS) shows a compositional bias: low complexity. Over residues 598–609 (TSANQRTGSKKN) the composition is skewed to polar residues. Over residues 647-657 (ESKRPQSDRSA) the composition is skewed to basic and acidic residues. The span at 666–676 (RAETQLETTQA) shows a compositional bias: polar residues. Basic and acidic residues predominate over residues 679–700 (KIQEDRKAQADKGTQEDRRMQG). The segment covering 708–729 (KGTQSEGSAPTAMEGQSEQEVA) has biased composition (polar residues). Residues 736 to 745 (SRTPKLPPTA) are compositionally biased toward pro residues. Residues 829–844 (AKQEDSPFQCPKEERP) show a composition bias toward basic and acidic residues. The segment covering 1120–1131 (GQAAPGQGPSAE) has biased composition (low complexity). S1222 carries the phosphoserine modification. In terms of domain architecture, Ig-like 2 spans 1274 to 1362 (PQVIRKIRVE…GSASTDFCLS (89 aa)). C1296 and C1346 form a disulfide bridge. The region spanning 1390–1625 (KGLADSGCWG…YCELLGLTPL (236 aa)) is the Alpha-type protein kinase domain. The segment at 1628 to 1705 (PEAAHPQAKA…EEGSKAQGMR (78 aa)) is disordered. A compositionally biased stretch (polar residues) spans 1664-1696 (PQGTRKSAPSSKATPQASEPVTTQLLGQPPTQE).

It belongs to the protein kinase superfamily. Alpha-type protein kinase family. ALPK subfamily.

It localises to the nucleus. The catalysed reaction is L-seryl-[protein] + ATP = O-phospho-L-seryl-[protein] + ADP + H(+). It carries out the reaction L-threonyl-[protein] + ATP = O-phospho-L-threonyl-[protein] + ADP + H(+). Involved in cardiomyocyte differentiation. The protein is Alpha-protein kinase 3 of Homo sapiens (Human).